The following is a 199-amino-acid chain: 3-isopropylmalate dehydratase small subunit (199 aa).

It belongs to the LeuD family. LeuD type 1 subfamily. In terms of assembly, heterodimer of LeuC and LeuD.

The catalysed reaction is (2R,3S)-3-isopropylmalate = (2S)-2-isopropylmalate. It functions in the pathway amino-acid biosynthesis; L-leucine biosynthesis; L-leucine from 3-methyl-2-oxobutanoate: step 2/4. In terms of biological role, catalyzes the isomerization between 2-isopropylmalate and 3-isopropylmalate, via the formation of 2-isopropylmaleate. The sequence is that of 3-isopropylmalate dehydratase small subunit from Mycobacteroides abscessus (strain ATCC 19977 / DSM 44196 / CCUG 20993 / CIP 104536 / JCM 13569 / NCTC 13031 / TMC 1543 / L948) (Mycobacterium abscessus).